A 598-amino-acid polypeptide reads, in one-letter code: Elongation factor 4 (598 aa).

Positions 4–181 constitute a tr-type G domain; that stretch reads KKIRNFAIIA…AIVNLIPPPQ (178 aa). GTP-binding positions include 16 to 21 and 128 to 131; these read DHGKST and NKID.

This sequence belongs to the TRAFAC class translation factor GTPase superfamily. Classic translation factor GTPase family. LepA subfamily.

It localises to the cell membrane. It catalyses the reaction GTP + H2O = GDP + phosphate + H(+). Its function is as follows. Required for accurate and efficient protein synthesis under certain stress conditions. May act as a fidelity factor of the translation reaction, by catalyzing a one-codon backward translocation of tRNAs on improperly translocated ribosomes. Back-translocation proceeds from a post-translocation (POST) complex to a pre-translocation (PRE) complex, thus giving elongation factor G a second chance to translocate the tRNAs correctly. Binds to ribosomes in a GTP-dependent manner. This Mesomycoplasma hyopneumoniae (strain 7448) (Mycoplasma hyopneumoniae) protein is Elongation factor 4.